Here is a 417-residue protein sequence, read N- to C-terminus: MAP kinase-interacting serine/threonine-protein kinase 1 (417 aa).

The tract at residues 1-20 is disordered; that stretch reads MVSSQPVPIDDGGKRRKKKR. One can recognise a Protein kinase domain in the interval 37–321; that stretch reads RLTDELLGEG…AAQVLQHPWL (285 aa). ATP-binding positions include 43 to 51 and lysine 66; that span reads LGEGAYAKV. The active-site Proton acceptor is the aspartate 158. Positions 397–417 are disordered; that stretch reads AHARKGGSHLTHTTVTSQGAT. Residues 406 to 417 are compositionally biased toward polar residues; sequence LTHTTVTSQGAT.

It belongs to the protein kinase superfamily. CAMK Ser/Thr protein kinase family. Mg(2+) is required as a cofactor.

The enzyme catalyses L-seryl-[protein] + ATP = O-phospho-L-seryl-[protein] + ADP + H(+). The catalysed reaction is L-threonyl-[protein] + ATP = O-phospho-L-threonyl-[protein] + ADP + H(+). May play a role in the response to environmental stress and cytokines. Appears to regulate translation by phosphorylating EIF4E, thus increasing the affinity of this protein for the 7-methylguanosine-containing mRNA cap. The sequence is that of MAP kinase-interacting serine/threonine-protein kinase 1 (mknk1) from Xenopus tropicalis (Western clawed frog).